The chain runs to 361 residues: Alternative oxidase, mitochondrial (361 aa).

Residues 155-175 (LIRYVFLESVAGVPGMVAGML) traverse the membrane as a helical segment. Residues Glu-162, Glu-201, and His-204 each contribute to the Fe cation site. A helical transmembrane segment spans residues 221 to 241 (MILGAQGVFFNSFFLCYLFSP). Positions 252, 253, 309, and 312 each coordinate Fe cation. The interval 320–361 (GNLKQDEDPNPFVSEYGKERGEKPGKGIESLKPVGWERDEVI) is disordered. The segment covering 335-345 (YGKERGEKPGK) has biased composition (basic and acidic residues).

This sequence belongs to the alternative oxidase family. The cofactor is Fe cation.

The protein resides in the mitochondrion inner membrane. In terms of biological role, catalyzes cyanide-resistant oxygen consumption. May increase respiration when the cytochrome respiratory pathway is restricted, or in response to low temperatures. This chain is Alternative oxidase, mitochondrial (aox), found in Botryotinia fuckeliana (Noble rot fungus).